The chain runs to 165 residues: Type IV major pilin protein PilE1 (165 aa).

The propeptide at 1-7 is leader sequence; that stretch reads MNTLQKG. Phe-8 carries the post-translational modification N-methylphenylalanine. The chain crosses the membrane as a helical span at residues 8-28; sequence FTLIELMIVIAIVGILAAVAL. Ser-70 carries O-linked (DADDGlc) serine glycosylation. An O-(2-aminoethylphosphoryl)serine; alternate modification is found at Ser-75. Position 75 is an O-(2-cholinephosphoryl)serine; alternate (Ser-75). Ser-75 carries the post-translational modification Phosphoserine; alternate. Ser-101 bears the O-(sn-1-glycerophosphoryl)serine; partial mark. Residues Cys-128 and Cys-158 are joined by a disulfide bond. The segment covering 137–153 has biased composition (basic and acidic residues); sequence DDTVADAKDGKEIDTKH. A disordered region spans residues 137–165; sequence DDTVADAKDGKEIDTKHLPSTCRDNFDAK.

This sequence belongs to the N-Me-Phe pilin family. The pili are polar flexible filaments of about 5.4 nanometers diameter and 2.5 micrometers average length; they consist of only a single polypeptide chain arranged in a helical configuration of five subunits per turn in the assembled pilus. The O-linked glycan identified as Gal-GlcNAc disaccharide in PubMed:7477282 and PubMed:10048019 is now identified as either a hexosyl-diacetamidotrideoxyhexoside (DATDHex) by mass spectrometry in PubMed:15249686, or alpha-D-galactopyranosyl-(1-&gt;3)-2,4-diacetamido-2,4-dideoxy-beta-D-glucopyranoside (DADDGlc) by X-ray diffraction in PubMed:16949362. It is not clear whether there is a chemical difference in the glycosylation of the two derivatives of strain MS11 used in these experiments, or not. In terms of processing, in some MS11 derivative strains, Ser-75 is modified to O-(2-aminoethylphosphoryl)serine, and in some other derivatives that can be secondarily modified to O-(2-cholinephosphoryl)serine by N-methylation.

The protein localises to the fimbrium. It is found in the membrane. In terms of biological role, major component of the type IV pilus (T4P) that plays a role in cellular adherence, microcolony formation, resistance to neutrophil mediated killing, twitching motility as well as transformation. Mediates the attachment and the formation of bacterial microcolonies on host epithelial cells. Mechanistically, pili retractation induces host NF-kappa-B activation in infected cells, which is temporally associated with the formation of gonococcal microcolonies. The sequence is that of Type IV major pilin protein PilE1 (pilE1) from Neisseria gonorrhoeae.